The sequence spans 1010 residues: PHD finger protein 20 (1010 aa).

Tudor domains lie at 4–69 (HPPN…RPLE) and 83–147 (GSSE…GNAR). Disordered regions lie at residues 142 to 373 (IVGN…EGQL) and 483 to 609 (EKSP…GKLK). Residues 147–246 (RPKETDHKSL…VEKKPEKDLV (100 aa)) are compositionally biased toward basic and acidic residues. S159 carries the phosphoserine modification. Positions 257–269 (KRKRGRPPSITPT) form a DNA-binding region, a.T hook. Residues 267–280 (TPTAVDSNSQTLQP) show a composition bias toward polar residues. 3 stretches are compositionally biased toward basic and acidic residues: residues 292 to 325 (KRSD…DLSR), 483 to 493 (EKSPEPEEGPG), and 525 to 541 (AKEK…ELVR). The C2H2-type zinc-finger motif lies at 455-485 (FRCKVLDCLKFFRKAKLLHYHMKYFHGMEKS). A compositionally biased stretch (basic residues) spans 542 to 554 (VKPKKKKKKKKKT). A PHD-type zinc finger spans residues 657-703 (RCICEVQEENDFMIQCEECQCWQHGVCMGLLEENVPEKYTCYVCQDP). Residues 804-827 (RSEESPSYRTLNGAVEKPSPLPRS) are disordered. K841 carries the N6-acetyllysine modification. Phosphoserine is present on residues S876 and S878. Residues 877 to 902 (LSPRLGWPIDQDRSRGDIDPKPSSPK) form a disordered region. A compositionally biased stretch (basic and acidic residues) spans 886–902 (DQDRSRGDIDPKPSSPK).

Homodimer; disulfide-linked. Component of some MLL1/MLL complex, at least composed of the core components KMT2A/MLL1, ASH2L, HCFC1, WDR5 and RBBP5, as well as the facultative components BACC1, CHD8, E2F6, HSP70, INO80C, KANSL1, LAS1L, MAX, MCRS1, MGA, MYST1/MOF, PELP1, PHF20, PRP31, RING2, RUVB1/TIP49A, RUVB2/TIP49B, SENP3, TAF1, TAF4, TAF6, TAF7, TAF9 and TEX10. Component of the NSL complex at least composed of MOF/KAT8, KANSL1, KANSL2, KANSL3, MCRS1, PHF20, OGT1/OGT, WDR5 and HCFC1. Ubiquitinated by TRIM26; leading to proteasomal degradation.

Its subcellular location is the nucleus. In terms of biological role, contributes to methyllysine-dependent p53/TP53 stabilization and up-regulation after DNA damage. Methyllysine-binding protein, component of the MOF histone acetyltransferase protein complex. Not required for maintaining the global histone H4 'Lys-16' acetylation (H4K16ac) levels or locus specific histone acetylation, but instead works downstream in transcriptional regulation of MOF target genes. As part of the NSL complex it may be involved in acetylation of nucleosomal histone H4 on several lysine residues. The polypeptide is PHD finger protein 20 (Phf20) (Mus musculus (Mouse)).